The following is a 169-amino-acid chain: Photosystem I assembly protein Ycf3 (169 aa).

TPR repeat units lie at residues 35 to 68 (AFTYYRDGMSAQSEGEYAEASQNYYEAMRLEIDP), 72 to 105 (SYILHNIGLIHTSNGEHARALEYYFQALERNPSL), and 120 to 153 (GEQAIQQGDFETSEAWFGKAADHWKQAVLLAPGN).

This sequence belongs to the Ycf3 family.

The protein resides in the plastid. It localises to the chloroplast thylakoid membrane. Its function is as follows. Essential for the assembly of the photosystem I (PSI) complex. May act as a chaperone-like factor to guide the assembly of the PSI subunits. The chain is Photosystem I assembly protein Ycf3 from Huperzia lucidula (Shining clubmoss).